A 557-amino-acid polypeptide reads, in one-letter code: Phosphomethylpyrimidine synthase (557 aa).

Substrate is bound by residues Asn197, Met226, Tyr255, His291, 311 to 313 (SRG), 352 to 355 (DGLR), and Glu391. Residue His395 coordinates Zn(2+). Tyr418 lines the substrate pocket. Position 459 (His459) interacts with Zn(2+). [4Fe-4S] cluster-binding residues include Cys539, Cys542, and Cys547.

It belongs to the ThiC family. Homodimer. The cofactor is [4Fe-4S] cluster.

The catalysed reaction is 5-amino-1-(5-phospho-beta-D-ribosyl)imidazole + S-adenosyl-L-methionine = 4-amino-2-methyl-5-(phosphooxymethyl)pyrimidine + CO + 5'-deoxyadenosine + formate + L-methionine + 3 H(+). Its pathway is cofactor biosynthesis; thiamine diphosphate biosynthesis. In terms of biological role, catalyzes the synthesis of the hydroxymethylpyrimidine phosphate (HMP-P) moiety of thiamine from aminoimidazole ribotide (AIR) in a radical S-adenosyl-L-methionine (SAM)-dependent reaction. The protein is Phosphomethylpyrimidine synthase of Anaplasma phagocytophilum (strain HZ).